Reading from the N-terminus, the 238-residue chain is Aspartate/glutamate leucyltransferase (238 aa).

This sequence belongs to the R-transferase family. Bpt subfamily.

It is found in the cytoplasm. It catalyses the reaction N-terminal L-glutamyl-[protein] + L-leucyl-tRNA(Leu) = N-terminal L-leucyl-L-glutamyl-[protein] + tRNA(Leu) + H(+). It carries out the reaction N-terminal L-aspartyl-[protein] + L-leucyl-tRNA(Leu) = N-terminal L-leucyl-L-aspartyl-[protein] + tRNA(Leu) + H(+). In terms of biological role, functions in the N-end rule pathway of protein degradation where it conjugates Leu from its aminoacyl-tRNA to the N-termini of proteins containing an N-terminal aspartate or glutamate. The chain is Aspartate/glutamate leucyltransferase from Shewanella sp. (strain MR-7).